Consider the following 427-residue polypeptide: 3-phosphoshikimate 1-carboxyvinyltransferase (427 aa).

3-phosphoshikimate contacts are provided by K20, S21, and R25. K20 lines the phosphoenolpyruvate pocket. 2 residues coordinate phosphoenolpyruvate: G92 and R120. 4 residues coordinate 3-phosphoshikimate: S166, Q168, D312, and K339. Q168 provides a ligand contact to phosphoenolpyruvate. D312 (proton acceptor) is an active-site residue. Phosphoenolpyruvate-binding residues include R343 and R385.

It belongs to the EPSP synthase family. As to quaternary structure, monomer.

The protein localises to the cytoplasm. The enzyme catalyses 3-phosphoshikimate + phosphoenolpyruvate = 5-O-(1-carboxyvinyl)-3-phosphoshikimate + phosphate. Its pathway is metabolic intermediate biosynthesis; chorismate biosynthesis; chorismate from D-erythrose 4-phosphate and phosphoenolpyruvate: step 6/7. Catalyzes the transfer of the enolpyruvyl moiety of phosphoenolpyruvate (PEP) to the 5-hydroxyl of shikimate-3-phosphate (S3P) to produce enolpyruvyl shikimate-3-phosphate and inorganic phosphate. This chain is 3-phosphoshikimate 1-carboxyvinyltransferase, found in Streptococcus pneumoniae (strain 70585).